The following is a 204-amino-acid chain: Peptidyl-prolyl cis-trans isomerase CYP20-1 (204 aa).

Positions 1-23 (MASSVTLLLWSLLLLGTLSAIQA) are cleaved as a signal peptide. Positions 38 to 201 (YFDVEIDGKA…SKVVIVDSGE (164 aa)) constitute a PPIase cyclophilin-type domain.

This sequence belongs to the cyclophilin-type PPIase family. As to quaternary structure, interacts with the PP2A A subunit PP2AA1/RCN1. In terms of tissue distribution, ubiquitous, mostly in aerial organs. Higher levels in leaf and buds, and lower levels in seedlings.

The protein localises to the endoplasmic reticulum. Its subcellular location is the secreted. The enzyme catalyses [protein]-peptidylproline (omega=180) = [protein]-peptidylproline (omega=0). Its activity is regulated as follows. Binds cyclosporin A (CsA). CsA mediates some of its effects via an inhibitory action on PPIase. PPIases accelerate the folding of proteins. It catalyzes the cis-trans isomerization of proline imidic peptide bonds in oligopeptides. Seems to be involved in root development. The sequence is that of Peptidyl-prolyl cis-trans isomerase CYP20-1 (CYP20-1) from Arabidopsis thaliana (Mouse-ear cress).